An 821-amino-acid chain; its full sequence is Lon protease (821 aa).

A Lon N-terminal domain is found at 18–216; it reads LPLMSLREVV…KVYELLQGEI (199 aa). 368 to 375 lines the ATP pocket; the sequence is GPPGVGKT. Residues 606 to 787 enclose the Lon proteolytic domain; it reads TSQVGVCTGL…DEVLPQALMA (182 aa). Catalysis depends on residues Ser693 and Lys736.

The protein belongs to the peptidase S16 family. Homohexamer. Organized in a ring with a central cavity.

It localises to the cytoplasm. It catalyses the reaction Hydrolysis of proteins in presence of ATP.. Its function is as follows. ATP-dependent serine protease that mediates the selective degradation of mutant and abnormal proteins as well as certain short-lived regulatory proteins. Required for cellular homeostasis and for survival from DNA damage and developmental changes induced by stress. Degrades polypeptides processively to yield small peptide fragments that are 5 to 10 amino acids long. Binds to DNA in a double-stranded, site-specific manner. The chain is Lon protease from Nitratidesulfovibrio vulgaris (strain ATCC 29579 / DSM 644 / CCUG 34227 / NCIMB 8303 / VKM B-1760 / Hildenborough) (Desulfovibrio vulgaris).